The sequence spans 741 residues: Catalase-peroxidase (741 aa).

The signal sequence occupies residues 1–21 (MRNFRRFTIALLVLFLGPIGA). Residues 109–231 (WHSAGTYRIS…LAAVQMGLIY (123 aa)) constitute a cross-link (tryptophyl-tyrosyl-methioninium (Trp-Tyr) (with M-257)). Residue His-110 is the Proton acceptor of the active site. Residues 231–257 (YVNPEGPNGNPDPLAAAKDIRETFGRM) constitute a cross-link (tryptophyl-tyrosyl-methioninium (Tyr-Met) (with W-109)). Residue His-272 coordinates heme b.

The protein belongs to the peroxidase family. Peroxidase/catalase subfamily. Homodimer or homotetramer. Heme b serves as cofactor. Post-translationally, formation of the three residue Trp-Tyr-Met cross-link is important for the catalase, but not the peroxidase activity of the enzyme.

It catalyses the reaction H2O2 + AH2 = A + 2 H2O. The enzyme catalyses 2 H2O2 = O2 + 2 H2O. Bifunctional enzyme with both catalase and broad-spectrum peroxidase activity. The polypeptide is Catalase-peroxidase (Leptospira biflexa serovar Patoc (strain Patoc 1 / Ames)).